Consider the following 284-residue polypeptide: Rubber cis-polyprenyltransferase HRT2 (284 aa).

Asp-41 is an active-site residue.

It belongs to the UPP synthase family. Predominantly expressed in latex.

It catalyses the reaction (cis-prenyl)(n)-diphosphate + isopentenyl diphosphate = (cis-prenyl)(n+1)-diphosphate + diphosphate. Its function is as follows. Proposed to be involved in rubber biosynthesis as a particle-bound rubber transferase responsible for the cis-1,4-polymerization of isoprene subunits. Probably requires additional factors for the production of high molecular mass rubber. The chain is Rubber cis-polyprenyltransferase HRT2 (HRT2) from Hevea brasiliensis (Para rubber tree).